We begin with the raw amino-acid sequence, 353 residues long: Cyclic GMP-AMP synthase-like receptor (353 aa).

ATP-binding positions include S60 and 72 to 74 (EYD). Mg(2+)-binding residues include E72, D74, and D183. GTP is bound at residue D183. Position 245 (K245) interacts with ATP. Mn(2+) contacts are provided by L269 and E270.

This sequence belongs to the mab-21 family. Mg(2+) is required as a cofactor. The cofactor is Mn(2+).

The enzyme catalyses GTP + ATP = 2',3'-cGAMP + 2 diphosphate. It carries out the reaction GTP + ATP = pppGp(2'-5')A + diphosphate. The catalysed reaction is pppGp(2'-5')A = 2',3'-cGAMP + diphosphate. Its function is as follows. Nucleotidyltransferase that catalyzes the formation of cyclic GMP-AMP (2',3'-cGAMP) from ATP and GTP and plays a key role in innate immunity. Acts as a key sensor of double-stranded RNA (dsRNA), the presence of dsRNA in the cytoplasm being a danger signal that triggers the immune responses. Directly binds dsRNA, activating the nucleotidyltransferase activity, leading to synthesis of 2',3'-cGAMP, a second messenger that binds to and activates Sting, thereby triggering the immune response via activation of the NF-kappa-B transcription factor. The protein is Cyclic GMP-AMP synthase-like receptor of Nicrophorus vespilloides (Boreal carrion beetle).